Reading from the N-terminus, the 883-residue chain is Phosphoenolpyruvate carboxylase (883 aa).

Active-site residues include His-138 and Lys-546.

This sequence belongs to the PEPCase type 1 family. Requires Mg(2+) as cofactor.

The enzyme catalyses oxaloacetate + phosphate = phosphoenolpyruvate + hydrogencarbonate. Functionally, forms oxaloacetate, a four-carbon dicarboxylic acid source for the tricarboxylic acid cycle. In Escherichia coli O45:K1 (strain S88 / ExPEC), this protein is Phosphoenolpyruvate carboxylase.